Reading from the N-terminus, the 448-residue chain is MANVVENLGKLERRVTISLPKDAVQKEVDSRIRQLAKNVRMPGFRPGKVPLKMVTQQYAGQVEAEVLSDKVGKQFFDISRAENLRVAGQPSFAPKADAVEGDYAFDATFEVYPEVKLGDVATAEIERTKTTISDAEIDRTLDILRKQRVHYHARGEAGEHGDGGADTAAKDGDRVTVDFVGKIDGEAFQGGTADDFAFVLGEGRMLPEFEKAALGLKVGESKEFDLAFPEDYHGKEVAGKTAQFAITMKKIEWPHLPEIDAEFAKSLGIEDGDLTKMRNEIRDNLEREAKRRTQAVVKNQVMDALLKISELDVPKALIEQDQQRLVEMARQDLVQRGVPNAKDAPIPAEMFAEQAERRVKLGLVLAELVKANELQAKPEQIRAEVDEFAKSYEDPKEVVRWYYSNQQRLAEMEAYVVESNVVDFVLSKAKVTDKEVSFEELASATAQA.

Positions 172-257 (GDRVTVDFVG…MKKIEWPHLP (86 aa)) constitute a PPIase FKBP-type domain.

The protein belongs to the FKBP-type PPIase family. Tig subfamily.

The protein resides in the cytoplasm. It carries out the reaction [protein]-peptidylproline (omega=180) = [protein]-peptidylproline (omega=0). In terms of biological role, involved in protein export. Acts as a chaperone by maintaining the newly synthesized protein in an open conformation. Functions as a peptidyl-prolyl cis-trans isomerase. The protein is Trigger factor of Paraburkholderia phymatum (strain DSM 17167 / CIP 108236 / LMG 21445 / STM815) (Burkholderia phymatum).